The primary structure comprises 104 residues: Inner membrane protein YjeO (104 aa).

Residues 1–5 (MSARM) are Cytoplasmic-facing. A helical membrane pass occupies residues 6–26 (FVLCCIWFIVAFLWITITSAL). Residues 27-52 (DKEWMIDGRGINNVCDVLMYLEEDDT) lie on the Periplasmic side of the membrane. The chain crosses the membrane as a helical span at residues 53 to 73 (RDVGVIMTLPLFFPFLWFALW). Over 74–77 (RKKR) the chain is Cytoplasmic. The chain crosses the membrane as a helical span at residues 78 to 98 (GWFMYATALAIFGYWLWQFFL). Residues 99 to 104 (RYQFCL) are Periplasmic-facing.

Its subcellular location is the cell inner membrane. In Escherichia coli (strain K12), this protein is Inner membrane protein YjeO (yjeO).